Reading from the N-terminus, the 395-residue chain is NAD(P)H-quinone oxidoreductase subunit H, chloroplastic (395 aa).

The protein belongs to the complex I 49 kDa subunit family. As to quaternary structure, NDH is composed of at least 16 different subunits, 5 of which are encoded in the nucleus.

Its subcellular location is the plastid. The protein localises to the chloroplast thylakoid membrane. The enzyme catalyses a plastoquinone + NADH + (n+1) H(+)(in) = a plastoquinol + NAD(+) + n H(+)(out). The catalysed reaction is a plastoquinone + NADPH + (n+1) H(+)(in) = a plastoquinol + NADP(+) + n H(+)(out). NDH shuttles electrons from NAD(P)H:plastoquinone, via FMN and iron-sulfur (Fe-S) centers, to quinones in the photosynthetic chain and possibly in a chloroplast respiratory chain. The immediate electron acceptor for the enzyme in this species is believed to be plastoquinone. Couples the redox reaction to proton translocation, and thus conserves the redox energy in a proton gradient. This chain is NAD(P)H-quinone oxidoreductase subunit H, chloroplastic, found in Chloranthus spicatus (Chulantree).